Reading from the N-terminus, the 398-residue chain is Succinate--CoA ligase [ADP-forming] subunit beta (398 aa).

The ATP-grasp domain maps to lysine 9–glutamate 254. Residues lysine 46, glycine 53 to glycine 55, glutamate 109, alanine 112, and glutamate 117 contribute to the ATP site. Residues asparagine 209 and aspartate 223 each contribute to the Mg(2+) site. Substrate contacts are provided by residues asparagine 274 and glycine 331–methionine 333.

Belongs to the succinate/malate CoA ligase beta subunit family. Heterotetramer of two alpha and two beta subunits. It depends on Mg(2+) as a cofactor.

It carries out the reaction succinate + ATP + CoA = succinyl-CoA + ADP + phosphate. It catalyses the reaction GTP + succinate + CoA = succinyl-CoA + GDP + phosphate. Its pathway is carbohydrate metabolism; tricarboxylic acid cycle; succinate from succinyl-CoA (ligase route): step 1/1. In terms of biological role, succinyl-CoA synthetase functions in the citric acid cycle (TCA), coupling the hydrolysis of succinyl-CoA to the synthesis of either ATP or GTP and thus represents the only step of substrate-level phosphorylation in the TCA. The beta subunit provides nucleotide specificity of the enzyme and binds the substrate succinate, while the binding sites for coenzyme A and phosphate are found in the alpha subunit. This Afipia carboxidovorans (strain ATCC 49405 / DSM 1227 / KCTC 32145 / OM5) (Oligotropha carboxidovorans) protein is Succinate--CoA ligase [ADP-forming] subunit beta.